A 393-amino-acid chain; its full sequence is NAD(P)H-quinone oxidoreductase subunit H, chloroplastic (393 aa).

The protein belongs to the complex I 49 kDa subunit family. As to quaternary structure, NDH is composed of at least 16 different subunits, 5 of which are encoded in the nucleus.

Its subcellular location is the plastid. The protein localises to the chloroplast thylakoid membrane. It catalyses the reaction a plastoquinone + NADH + (n+1) H(+)(in) = a plastoquinol + NAD(+) + n H(+)(out). It carries out the reaction a plastoquinone + NADPH + (n+1) H(+)(in) = a plastoquinol + NADP(+) + n H(+)(out). NDH shuttles electrons from NAD(P)H:plastoquinone, via FMN and iron-sulfur (Fe-S) centers, to quinones in the photosynthetic chain and possibly in a chloroplast respiratory chain. The immediate electron acceptor for the enzyme in this species is believed to be plastoquinone. Couples the redox reaction to proton translocation, and thus conserves the redox energy in a proton gradient. This Ceratophyllum demersum (Rigid hornwort) protein is NAD(P)H-quinone oxidoreductase subunit H, chloroplastic.